We begin with the raw amino-acid sequence, 124 residues long: Small ribosomal subunit protein uS12 (124 aa).

3-methylthioaspartic acid is present on aspartate 89. The disordered stretch occupies residues 104 to 124 (LQGVKDRKQSRSKYGAKRPKK). The span at 113–124 (SRSKYGAKRPKK) shows a compositional bias: basic residues.

The protein belongs to the universal ribosomal protein uS12 family. As to quaternary structure, part of the 30S ribosomal subunit. Contacts proteins S8 and S17. May interact with IF1 in the 30S initiation complex.

Its function is as follows. With S4 and S5 plays an important role in translational accuracy. In terms of biological role, interacts with and stabilizes bases of the 16S rRNA that are involved in tRNA selection in the A site and with the mRNA backbone. Located at the interface of the 30S and 50S subunits, it traverses the body of the 30S subunit contacting proteins on the other side and probably holding the rRNA structure together. The combined cluster of proteins S8, S12 and S17 appears to hold together the shoulder and platform of the 30S subunit. In Thiomonas delicata (Thiomonas cuprina), this protein is Small ribosomal subunit protein uS12.